The following is a 111-amino-acid chain: BET1-like protein (111 aa).

Over 1 to 86 the chain is Cytoplasmic; sequence MADWTRAQSS…MARSGRDNRK (86 aa). Phosphoserine occurs at positions 9 and 37. A t-SNARE coiled-coil homology domain is found at 15–77; that stretch reads DILDRENKRM…TGSVKRFSTM (63 aa). A helical; Anchor for type IV membrane protein membrane pass occupies residues 87–107; the sequence is LLCGMAVVLIVAFFILSYLLS. The Lumenal segment spans residues 108–111; sequence RTRT.

Component of a SNARE complex consisting of STX5, YKT6, GOSR1 and BET1L. Interacts with STX5.

It localises to the golgi apparatus membrane. It is found in the golgi apparatus. Its subcellular location is the trans-Golgi network membrane. Vesicle SNARE required for targeting and fusion of retrograde transport vesicles with the Golgi complex. Required for the integrity of the Golgi complex. The chain is BET1-like protein from Mus musculus (Mouse).